The sequence spans 2623 residues: Probable polyketide synthase 31 (2623 aa).

Residues 1–11 (MTQNIDNNNNK) show a composition bias toward low complexity. Positions 1 to 25 (MTQNIDNNNNKLIRDRNDDDDVDRN) are disordered. Residues 27 to 461 (DGDVAVIGIG…GSNVCLILSE (435 aa)) enclose the Ketosynthase family 3 (KS3) domain. Active-site for beta-ketoacyl synthase activity residues include Cys-199, His-338, and His-384. Positions 666 to 699 (GVSADIIIGHSLGEVSSPYCSGMIDFQTLCYLIY) are acyl/malonyl transferase. Ser-676 (for acyl/malonyl transferase activity) is an active-site residue. An N-terminal hotdog fold region spans residues 959 to 1088 (HEKIKSEGPS…GNFNLTKHNS (130 aa)). A PKS/mFAS DH domain is found at 959-1267 (HEKIKSEGPS…CALVSLGSNP (309 aa)). His-1000 (proton acceptor; for dehydratase activity) is an active-site residue. Residues 1105-1267 (NFTSISKQDF…CALVSLGSNP (163 aa)) are C-terminal hotdog fold. Asp-1177 (proton donor; for dehydratase activity) is an active-site residue. One can recognise a Carrier domain in the interval 2524–2601 (ANNEIIHSTI…QSIEIIKSAK (78 aa)). Ser-2561 is modified (O-(pantetheine 4'-phosphoryl)serine). The interval 2600–2623 (AKNNNKNNNNNNNKNNSNNKNKNN) is disordered. Positions 2601–2623 (KNNNKNNNNNNNKNNSNNKNKNN) are enriched in low complexity.

Pantetheine 4'-phosphate is required as a cofactor.

Its function is as follows. Probable polyketide synthase. The chain is Probable polyketide synthase 31 (pks31) from Dictyostelium discoideum (Social amoeba).